A 60-amino-acid polypeptide reads, in one-letter code: DNA gyrase inhibitor YacG (60 aa).

Residues Cys15, Cys18, Cys30, and Cys34 each contribute to the Zn(2+) site.

Belongs to the DNA gyrase inhibitor YacG family. Interacts with GyrB. Requires Zn(2+) as cofactor.

In terms of biological role, inhibits all the catalytic activities of DNA gyrase by preventing its interaction with DNA. Acts by binding directly to the C-terminal domain of GyrB, which probably disrupts DNA binding by the gyrase. The protein is DNA gyrase inhibitor YacG of Bradyrhizobium diazoefficiens (strain JCM 10833 / BCRC 13528 / IAM 13628 / NBRC 14792 / USDA 110).